A 94-amino-acid chain; its full sequence is Sulfocarbamoylase-1 (94 aa).

In terms of assembly, homodimer. As to expression, ubiquitous (at protein level). Highest levels of expression in crystalline style followed by digestive gland and mantle.

Its activity is regulated as follows. Strongly inhibited by the serine proteinase inhibitor AEBSF. Weakly inhibited by the proteinase inhibitors BSF and aprotinin, and by EDTA. Not inhibited by the proteinase inhibitors bestatin, E-64 and leupeptin. Functionally, hydrolysis of sulfocarbamoyl esters of paralytic shellfish toxins. Does not hydrolyze the carbamoyl esters of paralytic shellfish toxins. Ester hydrolysis is significantly affected by the stereochemistry of sulfate esters at C-11 of the substrate toxin. This is Sulfocarbamoylase-1 from Megangulus venulosus (Japanese bivalve).